Consider the following 141-residue polypeptide: Large ribosomal subunit protein uL11 (141 aa).

The protein belongs to the universal ribosomal protein uL11 family. In terms of assembly, part of the ribosomal stalk of the 50S ribosomal subunit. Interacts with L10 and the large rRNA to form the base of the stalk. L10 forms an elongated spine to which L12 dimers bind in a sequential fashion forming a multimeric L10(L12)X complex. Post-translationally, one or more lysine residues are methylated.

Functionally, forms part of the ribosomal stalk which helps the ribosome interact with GTP-bound translation factors. This chain is Large ribosomal subunit protein uL11, found in Alkaliphilus oremlandii (strain OhILAs) (Clostridium oremlandii (strain OhILAs)).